Reading from the N-terminus, the 1056-residue chain is Kinesin-like protein KIN-5A (1056 aa).

A disordered region spans residues 1-44; that stretch reads MDRRIGLTSPSPKSTEKSGRDLRSGGDANGGANTNSNSIPRGDK. Positions 14–24 are enriched in basic and acidic residues; it reads STEKSGRDLRS. Positions 49 to 395 constitute a Kinesin motor domain; that stretch reads NVQVILRCRP…LDYAHRAKNI (347 aa). 135–142 serves as a coordination point for ATP; the sequence is GQTGTGKT. The stretch at 443–525 forms a coiled coil; the sequence is QEEAEKKAMT…STIKEKEYVI (83 aa).

Belongs to the TRAFAC class myosin-kinesin ATPase superfamily. Kinesin family. KIN-5/BimC subfamily.

It localises to the cytoplasm. The protein localises to the cytoskeleton. It is found in the spindle. In terms of biological role, responsible for microtubule translocation. May be important for the organization of phragmoplast-specific arrays of microtubules. Plays an essential role in stabilizing the mitotic spindle. Required during mitotic cytokinesis. The polypeptide is Kinesin-like protein KIN-5A (Oryza sativa subsp. japonica (Rice)).